The following is a 328-amino-acid chain: Cytochrome f (328 aa).

The first 44 residues, 1-44 (MRTPDFSAIWQASKQLTARIILLAFATFALYVFHDLAFPQGAAA), serve as a signal peptide directing secretion. Heme contacts are provided by Y45, C66, C69, and H70. Residues 294–314 (IKGLMVFLAGIMLAQILLVIK) form a helical membrane-spanning segment.

Belongs to the cytochrome f family. As to quaternary structure, the 4 large subunits of the cytochrome b6-f complex are cytochrome b6, subunit IV (17 kDa polypeptide, PetD), cytochrome f and the Rieske protein, while the 4 small subunits are PetG, PetL, PetM and PetN. The complex functions as a dimer. It depends on heme as a cofactor.

Its subcellular location is the cellular thylakoid membrane. Functionally, component of the cytochrome b6-f complex, which mediates electron transfer between photosystem II (PSII) and photosystem I (PSI), cyclic electron flow around PSI, and state transitions. This is Cytochrome f from Rippkaea orientalis (strain PCC 8801 / RF-1) (Cyanothece sp. (strain PCC 8801)).